Consider the following 715-residue polypeptide: ATP-dependent RecD2 DNA helicase (715 aa).

The segment at 1–150 (MSAALPAEPF…STLHKMVSSW (150 aa)) is not required for helicase activity. ATP contacts are provided by residues Gln-343 and 363 to 367 (GTGKS). DNA-binding regions lie at residues Gly-391 and 407–414 (TVHRLLGY). Position 466 (Gln-466) interacts with ATP. A DNA-binding region is located at residue Val-470. Arg-493 lines the ATP pocket. 3 consecutive DNA-binding regions follow at residues 554 to 555 (RK), 596 to 604 (NDYNNEIFN), and 644 to 647 (TVHR). ATP is bound at residue Arg-679.

Belongs to the RecD family. RecD2 subfamily. In terms of assembly, monomer; homodimers seem to be inactive.

It carries out the reaction Couples ATP hydrolysis with the unwinding of duplex DNA at the replication fork by translocating in the 5'-3' direction. This creates two antiparallel DNA single strands (ssDNA). The leading ssDNA polymer is the template for DNA polymerase III holoenzyme which synthesizes a continuous strand.. It catalyses the reaction ATP + H2O = ADP + phosphate + H(+). Functionally, DNA-dependent ATPase (ssDNA stimulates the ATPase better than dsDNA) and ATP-dependent 5'-3' DNA helicase. Plays a role in an antioxidant pathway. Involved in DNA damage repair and/or recombination. Appears to move along DNA in single base steps, powered by hydrolysis of 1 molecule of ATP. Has low processivity, unwinds about 15-20 base pairs/second. Short (20 bp) substrates with 5'-overhangs or forked ends are the best substrates, is much less efficient on 52 or 76 bp substrates with 5'-overhangs. The presence of single-stranded DNA-binding protein (SSB) increases unwinding 4-5 fold. Has no activity on blunt DNA or DNA with 3'-overhangs. Requires at least 10 bases of 5'-ssDNA for helicase activity. The chain is ATP-dependent RecD2 DNA helicase from Deinococcus radiodurans (strain ATCC 13939 / DSM 20539 / JCM 16871 / CCUG 27074 / LMG 4051 / NBRC 15346 / NCIMB 9279 / VKM B-1422 / R1).